The sequence spans 61 residues: Large ribosomal subunit protein uL30 (61 aa).

Belongs to the universal ribosomal protein uL30 family. As to quaternary structure, part of the 50S ribosomal subunit.

This is Large ribosomal subunit protein uL30 from Clostridioides difficile (strain 630) (Peptoclostridium difficile).